Here is a 117-residue protein sequence, read N- to C-terminus: Circadian clock oscillator protein KaiB (117 aa).

The protein belongs to the KaiB family. In terms of assembly, may undergo a major conformational rearrangment; in the free state forms homooligomers. When bound to KaiC switches to a monomeric thioredoxin-fold (KaiB(fs)). The active oscillator complex is probably KaiC(6):KaiB(6).

Component of the KaiBC clock protein complex, which constitutes the main circadian regulator in cyanobacteria; it may modify the ATPase activity of KaiC. In terms of biological role, may be a metamorphic protein which reversibly switches between an inactive tetrameric fold and a rare, thioredoxin-like monomeric fold (KaiB(fs)). KaiB(fs) binds phospho-KaiC, and perhaps clock output effectors. The protein is Circadian clock oscillator protein KaiB of Prochlorococcus marinus (strain SARG / CCMP1375 / SS120).